The sequence spans 358 residues: DNA polymerase IV (358 aa).

One can recognise a UmuC domain in the interval 4–185 (IIHVDMDCFY…LPLIKIPGVG (182 aa)). Mg(2+) contacts are provided by D8 and D103. E104 is an active-site residue.

The protein belongs to the DNA polymerase type-Y family. In terms of assembly, monomer. Requires Mg(2+) as cofactor.

Its subcellular location is the cytoplasm. The enzyme catalyses DNA(n) + a 2'-deoxyribonucleoside 5'-triphosphate = DNA(n+1) + diphosphate. Functionally, poorly processive, error-prone DNA polymerase involved in untargeted mutagenesis. Copies undamaged DNA at stalled replication forks, which arise in vivo from mismatched or misaligned primer ends. These misaligned primers can be extended by PolIV. Exhibits no 3'-5' exonuclease (proofreading) activity. May be involved in translesional synthesis, in conjunction with the beta clamp from PolIII. The protein is DNA polymerase IV of Shewanella pealeana (strain ATCC 700345 / ANG-SQ1).